Here is a 148-residue protein sequence, read N- to C-terminus: MRTYTPLIYNIYNVHIWVFTESQGQIGQMSPRGKMETAVSQGQHKQLKDGHQHKGRKLSEEIASLLRLKECRRLNPASYYTPRRTSQSQSLSGSTFKEYNEYVNEKDSSRAQRQNAAAVLSKLAHDFWENDCVIDEDIFEDSSDEEQS.

Phosphoserine occurs at positions 59 and 86.

It localises to the cytoplasmic granule. It is found in the cytoplasm. Functionally, putative cyclin-dependent kinase (CDK) inhibitor necessary and sufficient for PHO pathway-dependent down-regulation of low-affinity phosphate transport. The chain is Putative cyclin-dependent kinase inhibitor SPL2 (SPL2) from Saccharomyces cerevisiae (strain YJM789) (Baker's yeast).